A 770-amino-acid chain; its full sequence is Integrin beta-2 (770 aa).

The signal sequence occupies residues 1–22 (MLPQRPQLLLLAGLLSLQSVLS). Position 23 is a pyrrolidone carboxylic acid (Q23). Residues 23 to 701 (QECTKYKVST…DMLECVKGPN (679 aa)) are Extracellular-facing. A PSI domain is found at 24-74 (ECTKYKVSTCRDCIESGPSCAWCQKLNFTGQGEPDSTRCDTRAQLLSKGCP). 28 disulfides stabilise this stretch: C25/C43, C33/C447, C36/C62, C46/C73, C191/C198, C246/C286, C386/C400, C420/C445, C449/C467, C459/C470, C472/C481, C483/C514, C497/C512, C506/C517, C519/C534, C536/C559, C541/C557, C549/C562, C564/C573, C575/C598, C582/C596, C590/C601, C603/C612, C615/C618, C622/C663, C628/C647, C631/C643, and C671/C696. N-linked (GlcNAc...) asparagine glycans are attached at residues N50 and N116. The 240-residue stretch at 124-363 (GYPIDLYYLM…ELIKSAYNKL (240 aa)) folds into the VWFA domain. Mg(2+) is bound by residues S136 and S138. Residues S138, D141, D142, and D173 each coordinate Ca(2+). Ca(2+) contacts are provided by N229, D231, P233, and E234. Mg(2+) is bound at residue E234. N-linked (GlcNAc...) asparagine glycosylation is present at N254. Positions 264 and 347 each coordinate Ca(2+). The Cell attachment site signature appears at 397 to 399 (RGD). 4 I-EGF domains span residues 449 to 482 (CREASRDRGVCGGRGSMECGVCRCDAGYIGKNCE), 483 to 535 (CQTH…QFCE), 536 to 574 (CDNVNCERYDGQVCGGDKRGLCFCGACRCNDQYEGSACQ), and 575 to 613 (CLKSTQGCLNLNGVECSGRGRCRCNVCQCDPGYQPPLCI). N501 carries N-linked (GlcNAc...) asparagine glycosylation. N642 carries N-linked (GlcNAc...) asparagine glycosylation. A helical transmembrane segment spans residues 702-724 (IAAIVGGTVGGVVLVGILLLAIW). Residues 725-770 (KALTHLSDLREYHRFEKEKLKSQWNNDNPLFKSATTTVMNPKFAES) are Cytoplasmic-facing. Phosphoserine is present on residues S746 and S757. A phosphothreonine mark is found at T759 and T761.

Belongs to the integrin beta chain family. As to quaternary structure, heterodimer of an alpha and a beta subunit. The ITGB2 beta subunit associates with the ITGAL, ITGAM, ITGAX or ITGAD alpha subunits. Found in a complex with CD177 and ITGAM/CD11b. Interacts with FGR. Interacts with COPS5 and RANBP9. Interacts with FLNA (via filamin repeats 4, 9, 12, 17, 19, 21, and 23). Interacts with THBD. Post-translationally, both Ser-746 and Ser-757 become phosphorylated when T-cells are exposed to phorbol esters. Phosphorylation on Thr-759 (but not on Ser-757) allows interaction with 14-3-3 proteins.

It is found in the cell membrane. It localises to the membrane raft. Functionally, integrin ITGAL/ITGB2 is a receptor for ICAM1, ICAM2, ICAM3 and ICAM4. Integrin ITGAL/ITGB2 is also a receptor for the secreted form of ubiquitin-like protein ISG15; the interaction is mediated by ITGAL. Integrins ITGAM/ITGB2 and ITGAX/ITGB2 are receptors for the iC3b fragment of the third complement component and for fibrinogen. Integrin ITGAX/ITGB2 recognizes the sequence G-P-R in fibrinogen alpha-chain. Integrin ITGAM/ITGB2 recognizes P1 and P2 peptides of fibrinogen gamma chain. Integrin ITGAM/ITGB2 is also a receptor for factor X. Integrin ITGAD/ITGB2 is a receptor for ICAM3 and VCAM1. Contributes to natural killer cell cytotoxicity. Involved in leukocyte adhesion and transmigration of leukocytes including T-cells and neutrophils. Triggers neutrophil transmigration during lung injury through PTK2B/PYK2-mediated activation. Integrin ITGAL/ITGB2 in association with ICAM3, contributes to apoptotic neutrophil phagocytosis by macrophages. In association with alpha subunit ITGAM/CD11b, required for CD177-PRTN3-mediated activation of TNF primed neutrophils. This Ovis canadensis (Bighorn sheep) protein is Integrin beta-2 (ITGB2).